A 225-amino-acid polypeptide reads, in one-letter code: Cytidylate kinase (225 aa).

11 to 19 (GPAAAGKST) provides a ligand contact to ATP.

It belongs to the cytidylate kinase family. Type 1 subfamily.

It localises to the cytoplasm. It carries out the reaction CMP + ATP = CDP + ADP. The catalysed reaction is dCMP + ATP = dCDP + ADP. This is Cytidylate kinase from Bacillus cereus (strain B4264).